The following is a 215-amino-acid chain: Casparian strip membrane protein 3 (215 aa).

The segment at 1–26 (MDSEKTGEAKITIQEPKAADPKGKGI) is disordered. Residues 1-55 (MDSEKTGEAKITIQEPKAADPKGKGIADAPPPPVVVTTAKAIQKLPRGGWKKGVA) are Cytoplasmic-facing. The chain crosses the membrane as a helical span at residues 56 to 76 (IFDFVVRLCAIATGLAATGIM). At 77 to 101 (GTTEQTLPFFTQFFQFHAEYNDLPT) the chain is on the extracellular side. The chain crosses the membrane as a helical span at residues 102–122 (FMFFVFANGIASGYLILSLPF). Topologically, residues 123–136 (SIVCIVRPLAIVPR) are cytoplasmic. A helical membrane pass occupies residues 137 to 157 (LLLIIFDTVVMALTIAAASAA). Topologically, residues 158–189 (AAIVYLAHNGNSNANWNAICQQFNDFCQQTST) are extracellular. The chain crosses the membrane as a helical span at residues 190 to 210 (AVVASFITAAMLTFLIVLSAF). The Cytoplasmic portion of the chain corresponds to 211–215 (ALKRN).

This sequence belongs to the Casparian strip membrane proteins (CASP) family. In terms of assembly, homodimer and heterodimers.

Its subcellular location is the cell membrane. Regulates membrane-cell wall junctions and localized cell wall deposition. Required for establishment of the Casparian strip membrane domain (CSD) and the subsequent formation of Casparian strips, a cell wall modification of the root endodermis that determines an apoplastic barrier between the intraorganismal apoplasm and the extraorganismal apoplasm and prevents lateral diffusion. This Ricinus communis (Castor bean) protein is Casparian strip membrane protein 3.